A 631-amino-acid chain; its full sequence is Probable glutamate--tRNA ligase, cytoplasmic (631 aa).

139 to 141 contributes to the L-glutamate binding site; sequence RFP. A 'HIGH' region motif is present at residues 144–153; that stretch reads PSGFLHIGHI. His149 contributes to the ATP binding site. L-glutamate contacts are provided by residues Asp173, 311–315, and Arg329; that span reads YDFAC. ATP contacts are provided by residues Glu332 and 367–371; that span reads VLSKR. A 'KMSKS' region motif is present at residues 367-371; the sequence is VLSKR.

The protein belongs to the class-I aminoacyl-tRNA synthetase family. Glutamate--tRNA ligase type 2 subfamily.

The protein localises to the cytoplasm. It carries out the reaction tRNA(Glu) + L-glutamate + ATP = L-glutamyl-tRNA(Glu) + AMP + diphosphate. The polypeptide is Probable glutamate--tRNA ligase, cytoplasmic (Enterocytozoon bieneusi (strain H348) (Microsporidian parasite)).